The following is a 131-amino-acid chain: Holo-[acyl-carrier-protein] synthase (131 aa).

Mg(2+) is bound by residues Asp-8 and Glu-59.

It belongs to the P-Pant transferase superfamily. AcpS family. The cofactor is Mg(2+).

It is found in the cytoplasm. It catalyses the reaction apo-[ACP] + CoA = holo-[ACP] + adenosine 3',5'-bisphosphate + H(+). Functionally, transfers the 4'-phosphopantetheine moiety from coenzyme A to a Ser of acyl-carrier-protein. This chain is Holo-[acyl-carrier-protein] synthase, found in Orientia tsutsugamushi (strain Ikeda) (Rickettsia tsutsugamushi).